The sequence spans 420 residues: COP9 signalosome complex subunit 11 (420 aa).

The region spanning serine 177–glycine 346 is the PCI domain. Positions valine 386 to valine 420 are disordered. Over residues serine 404–valine 420 the composition is skewed to acidic residues.

Component of a COP9 signalosome-like (CSN) complex.

It localises to the cytoplasm. The protein localises to the nucleus. Its function is as follows. Component of the COP9 signalosome (CSN) complex that acts as an regulator of the ubiquitin (Ubl) conjugation pathway by mediating the deneddylation of the cullin subunit of SCF-type E3 ubiquitin-protein ligase complexes The CSN complex is involved in the regulation of the mating pheromone response. PCI8 may also be involved in transcriptional and translational control. This Eremothecium gossypii (strain ATCC 10895 / CBS 109.51 / FGSC 9923 / NRRL Y-1056) (Yeast) protein is COP9 signalosome complex subunit 11 (PCI8).